A 316-amino-acid polypeptide reads, in one-letter code: C1GALT1-specific chaperone 1 (316 aa).

Residues 1 to 6 (MLSESS) are Cytoplasmic-facing. A helical; Signal-anchor for type II membrane protein membrane pass occupies residues 7–26 (SFLKGVMLGSIFCALITMLG). At 27–316 (HIRIGNRMHH…FLPPNGSEND (290 aa)) the chain is on the lumenal side.

Belongs to the glycosyltransferase 31 family. Beta3-Gal-T subfamily. In terms of assembly, associates with core 1 beta-3-galactosyltransferase (C1GALT1), probably not with the soluble active form.

The protein localises to the membrane. Probable chaperone required for the generation of 1 O-glycan Gal-beta1-3GalNAc-alpha1-Ser/Thr (T antigen), which is a precursor for many extended O-glycans in glycoproteins. Probably acts as a specific molecular chaperone assisting the folding/stability of core 1 beta-3-galactosyltransferase (C1GALT1). In Rattus norvegicus (Rat), this protein is C1GALT1-specific chaperone 1 (C1galt1c1).